The primary structure comprises 460 residues: Proline--tRNA ligase (460 aa).

It belongs to the class-II aminoacyl-tRNA synthetase family. ProS type 3 subfamily. As to quaternary structure, homodimer.

Its subcellular location is the cytoplasm. The catalysed reaction is tRNA(Pro) + L-proline + ATP = L-prolyl-tRNA(Pro) + AMP + diphosphate. Its function is as follows. Catalyzes the attachment of proline to tRNA(Pro) in a two-step reaction: proline is first activated by ATP to form Pro-AMP and then transferred to the acceptor end of tRNA(Pro). The polypeptide is Proline--tRNA ligase (Methanococcus maripaludis (strain C5 / ATCC BAA-1333)).